Consider the following 1151-residue polypeptide: UDP-N-acetylglucosamine--peptide N-acetylglucosaminyltransferase (1151 aa).

12 TPR repeats span residues 125–158 (LKKV…DPNN), 193–226 (AEAY…KPEF), 227–260 (IDAY…NPDL), 261–294 (YCVR…QPQF), 295–328 (AVAW…DPNF), 329–362 (LDAY…SGNH), 363–396 (AVVH…QPHF), 397–430 (PDAY…CPTH), 431–464 (ADSQ…YPEF), 465–498 (AAAH…APTF), 499–532 (ADAY…NPAF), and 533–566 (ADAH…KPDF). The stretch at 567–577 (PDAYCNLAHCH) is one TPR 13; truncated repeat. The Nuclear localization signal motif lies at 591-607 (RKLVQIVEDQLCKKRLP). Histidine 612 acts as the Proton acceptor in catalysis. Residues glutamine 954, lysine 957, 1010 to 1013 (VAAK), 1016 to 1019 (HVRR), 1034 to 1036 (GHT), and aspartate 1040 each bind UDP.

It belongs to the glycosyltransferase 41 family. O-GlcNAc transferase subfamily.

Its subcellular location is the nucleus. It localises to the cytoplasm. It is found in the perinuclear region. It carries out the reaction L-seryl-[protein] + UDP-N-acetyl-alpha-D-glucosamine = 3-O-(N-acetyl-beta-D-glucosaminyl)-L-seryl-[protein] + UDP + H(+). It catalyses the reaction L-threonyl-[protein] + UDP-N-acetyl-alpha-D-glucosamine = 3-O-(N-acetyl-beta-D-glucosaminyl)-L-threonyl-[protein] + UDP + H(+). It participates in protein modification; protein glycosylation. Functionally, addition of nucleotide-activated sugars directly onto the polypeptide through O-glycosidic linkage with the hydroxyl of serine or threonine. Influences tap habituation in the mechanosensory neurons cell autonomously. The sequence is that of UDP-N-acetylglucosamine--peptide N-acetylglucosaminyltransferase (ogt-1) from Caenorhabditis elegans.